The chain runs to 557 residues: Protein PNS1 (557 aa).

The disordered stretch occupies residues 1–58 (MSTEKQYQPQQPPPAYTGQGPDNGNAYGYPESYGKTETHSGDSCSGDTSMNPQQQGQQ). Topologically, residues 1–99 (MSTEKQYQPQ…DNNKPKFNDW (99 aa)) are cytoplasmic. The segment covering 41 to 58 (GDSCSGDTSMNPQQQGQQ) has biased composition (polar residues). A helical transmembrane segment spans residues 100-120 (PFIIVFLLTLCGFIVVASLTL). Topologically, residues 121 to 147 (RAWSQTYSSTGSGIYHDFDTGTLNTNS) are extracellular. A helical membrane pass occupies residues 148–168 (VILLVFSVVIAIFFAFIGIVL). The Cytoplasmic portion of the chain corresponds to 169-174 (CRAYPK). A helical transmembrane segment spans residues 175 to 195 (FFIYAGMIVNILAALGTAIMY). Topologically, residues 196–200 (MSLKY) are extracellular. Residues 201–221 (WSAGIVFLIFTFMTAWCYWGM) form a helical membrane-spanning segment. Residues 222–246 (RSRIPLTVAILRVIVLAMKNCPQSL) are Cytoplasmic-facing. Residues 247-267 (FVSFFGTIVASAFAMLFSTVV) form a helical membrane-spanning segment. Over 268 to 292 (VATYMKYDPSNTNSGCNVSGGDCSH) the chain is Extracellular. Asparagine 284 carries an N-linked (GlcNAc...) asparagine glycan. A helical transmembrane segment spans residues 293–313 (AKLIGVLVVVFFCGYYISEVI). The Cytoplasmic segment spans residues 314–350 (RNVMHCTVSGVFGSWYYRYKSDQGMPKWPAMGAFKRA). A helical membrane pass occupies residues 351–371 (MTYSFGSICFGSLIVSIIETF). The Extracellular portion of the chain corresponds to 372–393 (RQLLQLGKQAAIASTDNANWIR). A helical transmembrane segment spans residues 394–414 (IIFWLIDMLVGFIQWIAQYFN). The Cytoplasmic segment spans residues 415 to 454 (HYAYCIIALYGKPYLKAAKQTWYMFREKGIDALINDNLVN). The chain crosses the membrane as a helical span at residues 455–475 (VALGFYSLFASYMSCLFAFLY). The Extracellular segment spans residues 476–488 (LRFTKPGYNSDGD). A helical membrane pass occupies residues 489–509 (FNAPLMAFAFVIALQLTNIAN). The Cytoplasmic segment spans residues 510-557 (ETIRSGCATFFTALGHDPEVFQAQYPDRFDEIFRSYPQVLNKLTHQDV).

The protein belongs to the CTL (choline transporter-like) family.

It localises to the cell membrane. Functionally, probably involved in transport through the plasma membrane. The chain is Protein PNS1 (PNS1) from Candida glabrata (strain ATCC 2001 / BCRC 20586 / JCM 3761 / NBRC 0622 / NRRL Y-65 / CBS 138) (Yeast).